The following is an 87-amino-acid chain: uncharacterized protein (87 aa).

Residues Ser-4–Ile-87 enclose the 2Fe-2S ferredoxin-type domain. Residues Cys-39, Cys-44, Cys-47, and Cys-75 each coordinate [2Fe-2S] cluster.

The cofactor is [2Fe-2S] cluster.

This is an uncharacterized protein from Buchnera aphidicola subsp. Baizongia pistaciae (strain Bp).